A 246-amino-acid polypeptide reads, in one-letter code: DNA polymerase sliding clamp (246 aa).

This sequence belongs to the PCNA family. In terms of assembly, homotrimer. The subunits circularize to form a toroid; DNA passes through its center. Replication factor C (RFC) is required to load the toroid on the DNA.

Sliding clamp subunit that acts as a moving platform for DNA processing. Responsible for tethering the catalytic subunit of DNA polymerase and other proteins to DNA during high-speed replication. The sequence is that of DNA polymerase sliding clamp from Methanocella arvoryzae (strain DSM 22066 / NBRC 105507 / MRE50).